The following is a 142-amino-acid chain: Trafficking protein particle complex subunit 1 (142 aa).

It belongs to the TRAPP small subunits family. BET5 subfamily. As to quaternary structure, part of the multisubunit TRAPP (transport protein particle) complex.

It is found in the golgi apparatus. Its subcellular location is the cis-Golgi network. The protein localises to the endoplasmic reticulum. Functionally, may play a role in vesicular transport from endoplasmic reticulum to Golgi. The chain is Trafficking protein particle complex subunit 1 (trappc1-1) from Dictyostelium discoideum (Social amoeba).